The following is a 642-amino-acid chain: Phosphomethylpyrimidine synthase (642 aa).

Residues Asn235, Met264, Tyr293, His329, Ser349–Gly351, Asp390–Arg393, and Glu429 contribute to the substrate site. His433 contacts Zn(2+). Substrate is bound at residue Tyr456. Position 497 (His497) interacts with Zn(2+). [4Fe-4S] cluster-binding residues include Cys577, Cys580, and Cys585.

Belongs to the ThiC family. In terms of assembly, homodimer. [4Fe-4S] cluster serves as cofactor.

The enzyme catalyses 5-amino-1-(5-phospho-beta-D-ribosyl)imidazole + S-adenosyl-L-methionine = 4-amino-2-methyl-5-(phosphooxymethyl)pyrimidine + CO + 5'-deoxyadenosine + formate + L-methionine + 3 H(+). The protein operates within cofactor biosynthesis; thiamine diphosphate biosynthesis. In terms of biological role, catalyzes the synthesis of the hydroxymethylpyrimidine phosphate (HMP-P) moiety of thiamine from aminoimidazole ribotide (AIR) in a radical S-adenosyl-L-methionine (SAM)-dependent reaction. This chain is Phosphomethylpyrimidine synthase, found in Alteromonas mediterranea (strain DSM 17117 / CIP 110805 / LMG 28347 / Deep ecotype).